A 622-amino-acid chain; its full sequence is Threonine--tRNA ligase (622 aa).

The tract at residues 1–134 (MKTLLIHSDY…GHPLSELSRK (134 aa)) is editing domain. The catalytic stretch occupies residues 199–498 (PHVKYIKEKE…TLEDKPPALP (300 aa)). Residues Cys-291, His-343, and His-467 each coordinate Zn(2+).

This sequence belongs to the class-II aminoacyl-tRNA synthetase family. Homodimer. The cofactor is Zn(2+).

It localises to the cytoplasm. It catalyses the reaction tRNA(Thr) + L-threonine + ATP = L-threonyl-tRNA(Thr) + AMP + diphosphate + H(+). Its function is as follows. Catalyzes the attachment of threonine to tRNA(Thr) in a two-step reaction: L-threonine is first activated by ATP to form Thr-AMP and then transferred to the acceptor end of tRNA(Thr). Also edits incorrectly charged L-seryl-tRNA(Thr). This is Threonine--tRNA ligase from Methanococcus vannielii (strain ATCC 35089 / DSM 1224 / JCM 13029 / OCM 148 / SB).